Consider the following 251-residue polypeptide: Ubiquinone/menaquinone biosynthesis C-methyltransferase UbiE (251 aa).

S-adenosyl-L-methionine contacts are provided by residues Thr-74, Asp-95, and 123–124; that span reads NA.

The protein belongs to the class I-like SAM-binding methyltransferase superfamily. MenG/UbiE family.

It catalyses the reaction a 2-demethylmenaquinol + S-adenosyl-L-methionine = a menaquinol + S-adenosyl-L-homocysteine + H(+). The catalysed reaction is a 2-methoxy-6-(all-trans-polyprenyl)benzene-1,4-diol + S-adenosyl-L-methionine = a 5-methoxy-2-methyl-3-(all-trans-polyprenyl)benzene-1,4-diol + S-adenosyl-L-homocysteine + H(+). The protein operates within quinol/quinone metabolism; menaquinone biosynthesis; menaquinol from 1,4-dihydroxy-2-naphthoate: step 2/2. It participates in cofactor biosynthesis; ubiquinone biosynthesis. Functionally, methyltransferase required for the conversion of demethylmenaquinol (DMKH2) to menaquinol (MKH2) and the conversion of 2-polyprenyl-6-methoxy-1,4-benzoquinol (DDMQH2) to 2-polyprenyl-3-methyl-6-methoxy-1,4-benzoquinol (DMQH2). The chain is Ubiquinone/menaquinone biosynthesis C-methyltransferase UbiE from Shewanella woodyi (strain ATCC 51908 / MS32).